A 102-amino-acid chain; its full sequence is Large ribosomal subunit protein uL24 (102 aa).

The segment at 44 to 65 is disordered; the sequence is HAKPSQDNPQGGILNQEAPIHS.

This sequence belongs to the universal ribosomal protein uL24 family. As to quaternary structure, part of the 50S ribosomal subunit.

Its function is as follows. One of two assembly initiator proteins, it binds directly to the 5'-end of the 23S rRNA, where it nucleates assembly of the 50S subunit. Functionally, one of the proteins that surrounds the polypeptide exit tunnel on the outside of the subunit. The sequence is that of Large ribosomal subunit protein uL24 from Shouchella clausii (strain KSM-K16) (Alkalihalobacillus clausii).